Consider the following 210-residue polypeptide: Thymidylate kinase (210 aa).

D17 serves as a coordination point for dGMP. D17 is a binding site for dTMP. ATP-binding residues include R18, S19, G20, K21, S22, and T23. Residues R47, F74, R78, R99, and Y107 each coordinate dTMP. DGMP-binding residues include F74, R78, R99, Y107, S108, and Y153. Residues 143 to 155 (QNRSDYGEEIYEK) are LID. Residue R182 participates in ATP binding.

The protein belongs to the thymidylate kinase family. Homodimer. Binds two dTMP molecules per dimer. Binds only one dTGP molecule per dimer.

It carries out the reaction dTMP + ATP = dTDP + ADP. The catalysed reaction is dGMP + ATP = dGDP + ADP. The protein operates within pyrimidine metabolism; dTTP biosynthesis. Its activity is regulated as follows. Inhibited by deoxyguanosine (dG), deoxythymidine (dT) and azidothymidine (AZT). Its function is as follows. Catalyzes the phosphorylation of thymidine monophosphate (dTMP) to thymidine diphosphate (dTDP), the immediate precursor for the DNA building block dTTP. Can also phosphorylate dGMP and to a lesser extent GMP, dUMP and dIMP. Can use either ATP or dATP as phosphate donors in presence of Mg(2+). The sequence is that of Thymidylate kinase from Plasmodium falciparum (isolate 3D7).